The primary structure comprises 599 residues: Endoribonuclease ZC3H12A (599 aa).

Positions 1–40 (MSGPCGEKPVLEASPTMSLWEFEDSHSRQGTPRPGQELAA) are disordered. The segment at 42 to 87 (EASALELQMKVDFFRKLGYSSTEIHSVLQKLGVQADTNTVLGELVK) is ubiquitin association domain. The necessary for interaction with TANK stretch occupies residues 81–150 (VLGELVKHGT…DGSNVAMSHG (70 aa)). Residues 90-133 (TATERERQTSPDPCPQLPLVPRGGGTPKAPNLEPPLPEEEKEGS) are disordered. Ser-99 carries the phosphoserine modification. The RNase stretch occupies residues 112–297 (GGGTPKAPNL…LDNFLRKKPL (186 aa)). The RNase NYN domain maps to 135-290 (LRPVVIDGSN…LGRHGPSLDN (156 aa)). The tract at residues 214-220 (RRVGGKR) is RNA binding. A Mg(2+)-binding site is contributed by Asp-226. The segment at 301–324 (HRKQPCPYGRKCTYGIKCRFFHPE) adopts a C3H1-type zinc-finger fold. The necessary for interaction with ZC3H12D stretch occupies residues 301–457 (HRKQPCPYGR…SELWGVRGGG (157 aa)). Residues 343–420 (LSPPRAPSKD…SGSSFGPTDW (78 aa)) form a disordered region. The residue at position 344 (Ser-344) is a Phosphoserine. Positions 358 to 375 (PSPSSQSSSLLTESEQCS) are enriched in low complexity. The segment covering 386–399 (SPGSRQEGLTQTYA) has biased composition (polar residues). Ser-438 and Ser-442 each carry phosphoserine. Residues 522 to 546 (PPPTSVLQEPPVQSPGAGRSPWGRA) form a disordered region.

It belongs to the ZC3H12 family. In terms of assembly, oligomer. Found in a deubiquitination complex with TANK, USP10 and ZC3H12A; this complex inhibits genotoxic stress- or interleukin-1-beta-mediated NF-kappaB activation by promoting IKBKG or TRAF6 deubiquitination. Interacts with IKBKG; this interaction increases in response to DNA damage. Interacts with TANK; this interaction increases in response to DNA damage and serves as a bridge to anchor both TANK and USP10 into a deubiquitinating complex. Interacts with TRAF6; this interaction increases in response to DNA damage and is stimulated by TANK. Interacts with USP10; this interaction increases in response to DNA damage and serves as a bridge to anchor both TANK and USP10 into a deubiquitinating complex. Interacts with ZC3H12D. Interacts with TNRC6A. Interacts with IKBKB/IKKB. Interacts with IKBKB/IKKB. Interacts with BTRC; the interaction occurs when ZC3H12A is phosphorylated in a IKBKB/IKKB-dependent manner. Interacts with IRAK1; this interaction increases the interaction between ZC3H12A and IKBKB/IKKB. Interacts with UPF1; this interaction occurs in a mRNA translationally active- and termination-dependent manner and is essential for ZC3H12A-mediated degradation of target mRNAs. Associates with ribosomes. Interacts with ubiquitin. (Microbial infection) Oligomerization is necessary for antiviral activity. The cofactor is Mg(2+). In terms of processing, phosphorylated by IRAK1; phosphorylation is necessary for subsequent phosphorylation by the I-kappa-B-kinase (IKK) complex. Phosphorylated by I-kappa-B-kinase (IKK) subunits IKBKB/IKKB and CHUK/IKKA at Ser-438 and Ser-442; these phosphorylations promote ubiquitin proteasome-mediated degradation of ZC3H12A and hence facilitates rapid and robust production of IL-6 mRNA in response to toll-like receptor (TLR) or IL-1 receptor stimuli. (Microbial infection) Rapidly degraded in activated T-cells in response to phorbol 13-acetate 12-myristate (PMA) during HIV-1 viral infection. Post-translationally, ubiquitinated; ubiquitination is induced in response to interleukin IL1 receptor stimuli in a IKBKB/IKKB and IRAK1-dependent manner, leading to proteasome-mediated degradation. In terms of processing, proteolytically cleaved between Arg-111 and Arg-214 by MALT1 in activated T-cells; cleavage at Arg-111 is critical for promoting ZC3H12A degradation in response to T-cell receptor (TCR) stimulation, and hence is necessary for prolonging the stability of a set of mRNAs controlling T-cell activation and Th17 cell differentiation. As to expression, expressed in heart, placenta, spleen, kidney, liver and lung. Expressed in leukocytes. Expressed in monocyte.

It is found in the nucleus. Its subcellular location is the cytoplasm. It localises to the P-body. The protein localises to the rough endoplasmic reticulum membrane. The protein resides in the cytoplasmic granule. Its function is as follows. Endoribonuclease involved in various biological functions such as cellular inflammatory response and immune homeostasis, glial differentiation of neuroprogenitor cells, cell death of cardiomyocytes, adipogenesis and angiogenesis. Functions as an endoribonuclease involved in mRNA decay. Modulates the inflammatory response by promoting the degradation of a set of translationally active cytokine-induced inflammation-related mRNAs, such as IL6 and IL12B, during the early phase of inflammation. Prevents aberrant T-cell-mediated immune reaction by degradation of multiple mRNAs controlling T-cell activation, such as those encoding cytokines (IL6 and IL2), cell surface receptors (ICOS, TNFRSF4 and TNFR2) and transcription factor (REL). Inhibits cooperatively with ZC3H12A the differentiation of helper T cells Th17 in lungs. They repress target mRNA encoding the Th17 cell-promoting factors IL6, ICOS, REL, IRF4, NFKBID and NFKBIZ. The cooperation requires RNA-binding by RC3H1 and the nuclease activity of ZC3H12A. Together with RC3H1, destabilizes TNFRSF4/OX40 mRNA by binding to the conserved stem loop structure in its 3'UTR. Self regulates by destabilizing its own mRNA. Cleaves mRNA harboring a stem-loop (SL), often located in their 3'-UTRs, during the early phase of inflammation in a helicase UPF1-dependent manner. Plays a role in the inhibition of microRNAs (miRNAs) biogenesis. Cleaves the terminal loop of a set of precursor miRNAs (pre-miRNAs) important for the regulation of the inflammatory response leading to their degradation, and thus preventing the biosynthesis of mature miRNAs. Also plays a role in promoting angiogenesis in response to inflammatory cytokines by inhibiting the production of antiangiogenic microRNAs via its anti-dicer RNase activity. Affects the overall ubiquitination of cellular proteins. Positively regulates deubiquitinase activity promoting the cleavage at 'Lys-48'- and 'Lys-63'-linked polyubiquitin chains on TNF receptor-associated factors (TRAFs), preventing JNK and NF-kappa-B signaling pathway activation, and hence negatively regulating macrophage-mediated inflammatory response and immune homeostasis. Also induces deubiquitination of the transcription factor HIF1A, probably leading to its stabilization and nuclear import, thereby positively regulating the expression of proangiogenic HIF1A-targeted genes. Involved in a TANK-dependent negative feedback response to attenuate NF-kappaB activation through the deubiquitination of IKBKG or TRAF6 in response to interleukin-1-beta (IL1B) stimulation or upon DNA damage. Prevents stress granule (SGs) formation and promotes macrophage apoptosis under stress conditions, including arsenite-induced oxidative stress, heat shock and energy deprivation. Plays a role in the regulation of macrophage polarization; promotes IL4-induced polarization of macrophages M1 into anti-inflammatory M2 state. May also act as a transcription factor that regulates the expression of multiple genes involved in inflammatory response, angiogenesis, adipogenesis and apoptosis. Functions as a positive regulator of glial differentiation of neuroprogenitor cells through an amyloid precursor protein (APP)-dependent signaling pathway. Attenuates septic myocardial contractile dysfunction in response to lipopolysaccharide (LPS) by reducing I-kappa-B-kinase (IKK)-mediated NF-kappa-B activation, and hence myocardial pro-inflammatory cytokine production. In terms of biological role, (Microbial infection) Binds to Japanese encephalitis virus (JEV) and Dengue virus (DEN) RNAs. (Microbial infection) Exhibits antiviral activity against HIV-1 in lymphocytes by decreasing the abundance of HIV-1 viral RNA species. This is Endoribonuclease ZC3H12A from Homo sapiens (Human).